The following is a 476-amino-acid chain: MNDAGASIGRHRGCLLLFVALAVAFSSYVEQVESMPAEPVSQWPTFPRRNIAALARDGYLRNSASRAYKRGISTLAKNGLLPTYRSPYVETDKEDQNQDESQEKRNMASIARLRSYAAMKRNIQALARDGYRVGRGQYNPSNDKRNIAALARNGLLHKKDEATENEYYFPFYQNPIAPLSEIDHPLDVNEMYDFQQSMNPDMFPSMSQVYKRSLYEPYYDYYSPKDYDNSYFKRSSAGSPVHGLYRPNYLEPNTRTKRYVMPYPDILEGDEMIEQNDIDGEKRSVDDDDDDDDDDGEVHENFQKRHIGSLARLGLLPSFRYSGGRYSRSGRARLLLPSQELYRKHSPDENFGIREYLSSPEVESPVDPDDADIPPPPVPAHSHPTGRLLHRPLSNDLPHTSPLPLPPIAPTNYADTFTKNRWQSYTKETPKFYYFRSLKVPYHTSGKRYLLLPAVDNILLRKGYRNSSLPSRRKNQ.

Residues 1-34 (MNDAGASIGRHRGCLLLFVALAVAFSSYVEQVES) form the signal peptide. Val-133 is modified (valine amide). Propeptides lie at residues 160 to 232 (DEAT…NSYF) and 259 to 476 (YVMP…RKNQ). Disordered regions lie at residues 275-298 (QNDI…DGEV) and 360-385 (PEVE…SHPT). Over residues 286–297 (DDDDDDDDDDGE) the composition is skewed to acidic residues.

In terms of tissue distribution, neuropeptide-like precursor 1-1: Expressed in antennal lobe (AL), corpora cardiaca (CC), corpora allata (CA) and gnathal ganglion (GNG) (at protein level). Expression in AL detected in all animals, in GNG in most animals, expression in CC and CA in few animals (at protein level). Neuropeptide-like precursor 1-2: Expressed in antennal lobe (AL), corpora cardiaca (CC), corpora allata (CA) and gnathal ganglion (GNG) (at protein level). Expression in AL detected in all animals, in GNG in some animals, expression in CC and CA in few animals (at protein level). Neuropeptide-like precursor 1-3: Not expressed in antennal lobe (AL), corpora cardiaca (CC), corpora allata (CA) and gnathal ganglion (GNG) (at protein level). Neuropeptide-like precursor 1-4: Expressed in antennal lobe (AL) and gnathal ganglion (GNG) (at protein level). Expression in AL detected in most animals, in GNG in some animals (at protein level). Not expressed in CC and CA (at protein level). YRVamide: Expressed in antennal lobe (AL), corpora cardiaca (CC), corpora allata (CA) and gnathal ganglion (GNG) (at protein level). Expression in AL and GNG detected in most animals, expression in CC and CA in few animals (at protein level). Extended YRVamide: Expressed in antennal lobe (AL) and gnathal ganglion (GNG) (at protein level). Expression in AL detected in most animals, in GNG in some animals (at protein level). Not expressed in corpora cardiaca (CC) and corpora allata (CA) (at protein level). Neuropeptide-like precursor 1-6: Expressed in antennal lobe (AL), corpora cardiaca (CC), corpora allata (CA) and gnathal ganglion (GNG) (at protein level). Expression in GNG detected in all animals, expression in AL in most animals, in CC and CA in few animals (at protein level). Neuropeptide-like precursor 1-6(1-11): Expressed in antennal lobe (AL) and gnathal ganglion (GNG) in most animals (at protein level). Not expressed in corpora cardiaca (CC) and corpora allata (CA) (at protein level). Neuropeptide-like precursor 1-9: Expressed in antennal lobe (AL) and gnathal ganglion (GNG) (at protein level). Expression in AL detected in all animals in GNG in most (at protein level). Not expressed in corpora cardiaca (CC) and corpora allata (CA) (at protein level).

It localises to the secreted. This Agrotis ipsilon (Black cutworm moth) protein is Neuropeptide-like precursor 1.